Here is a 305-residue protein sequence, read N- to C-terminus: Protein MFI (305 aa).

In terms of assembly, can homodimerize. Interacts with MFF; the interaction inhibits MFF interaction with DNM1L.

Its subcellular location is the cytoplasm. The protein resides in the cytosol. It is found in the mitochondrion outer membrane. Acts as an inhibitor of mitochondrial fission. Interacts with MFF and prevents DNM1L recruitment to mitochondria, promoting a more fused mitochondrial network. In Rattus norvegicus (Rat), this protein is Protein MFI.